The chain runs to 41 residues: Large ribosomal subunit protein bL36 (41 aa).

Belongs to the bacterial ribosomal protein bL36 family.

The chain is Large ribosomal subunit protein bL36 from Brucella abortus (strain S19).